Consider the following 970-residue polypeptide: Disks large 1 tumor suppressor protein (970 aa).

Residues 4–64 (KKQEAHRALE…FYELTLLDDS (61 aa)) form the L27 domain. Residues 161–209 (TENAKEPTVEQQQKQQQAQQRSSRSPQQQNPQQQQGSKSRSGSQTVNGD) are disordered. The span at 171–204 (QQQKQQQAQQRSSRSPQQQNPQQQQGSKSRSGSQ) shows a compositional bias: low complexity. PDZ domains lie at 216–303 (DIQL…KRKR) and 330–421 (EIDL…GKTQ). The segment at 424-477 (TTSASGGGGGGLSSGQQLSQSQSQLATSQSQSQVHQQQHATPMVNSQSTEPGSR) is disordered. Over residues 437–462 (SGQQLSQSQSQLATSQSQSQVHQQQH) the composition is skewed to low complexity. Residues 466–477 (MVNSQSTEPGSR) are compositionally biased toward polar residues. Phosphoserine is present on S496. In terms of domain architecture, PDZ 3 spans 506-587 (TITIQKGPQG…VVTLLAQYRP (82 aa)). Residues 620–690 (KRSLYVRALF…PSKRRWERKM (71 aa)) form the SH3 domain. T714 bears the Phosphothreonine mark. Positions 780–955 (TRPVIILGPL…IYSKVKSMIW (176 aa)) constitute a Guanylate kinase-like domain.

The protein belongs to the MAGUK family. As to expression, during the cellular blastoderm stage, isoform B, isoform F, isoform H, isoform I and isoform L expression is localized to the cell borders. From stage 11 onwards, expression is found predominantly in the developing nervous system: axon bundles in the ventral cord and the brain. Stage 14 and 15 embryos exhibit expression in the developing body wall muscle. Expression in neuropil regions of the CNS and at NMJs persists through to larval development. Other isoforms show expression in embryonic epithelial cells. In larvae, expression is seen as a belt around salivary glands, imaginal disks and proventriculus. Expressed in adult reproductive tissues. In epithelia, coexpressed with scrib throughout development.

The protein resides in the cytoplasm. The protein localises to the cell membrane. It localises to the basolateral cell membrane. Its subcellular location is the cytoskeleton. It is found in the cell junction. The protein resides in the septate junction. Its function is as follows. During embryonic development, some isoforms are essential for proper neuronal differentiation and organization. Required for cell polarity; maintenance of apicobasal polarity. Plays a critical role at septate junctions in cellular growth control during larval development. The presence of a guanylate kinase domain suggests involvement in cellular adhesion as well as signal transduction to control cellular proliferation. The chain is Disks large 1 tumor suppressor protein (dlg1) from Drosophila melanogaster (Fruit fly).